The following is a 61-amino-acid chain: Temporin-SN3 (61 aa).

The first 22 residues, 1–22 (MFTLKKTLLLLFFLGTINLSLC), serve as a signal peptide directing secretion. The propeptide at 23–44 (EEERNAEEERRDGDDEMDVEVK) is removed in mature form. At lysine 61 the chain carries Lysine amide.

It belongs to the frog skin active peptide (FSAP) family. Temporin subfamily. Expressed by the skin glands.

The protein localises to the secreted. Functionally, antimicrobial peptide. Active against some Gram-positive and Gram-negative bacterial strains. Active against fungus C.glabrata 090902 but not against C.albicans ATCC 12231. Shows weak hemolytic activity against human erythrocytes. The protein is Temporin-SN3 of Sylvirana spinulosa (Fine-spined frog).